The chain runs to 67 residues: Protein SlyX homolog (67 aa).

The span at Thr48–Gln60 shows a compositional bias: polar residues. Residues Thr48–Tyr67 are disordered.

The protein belongs to the SlyX family.

The protein is Protein SlyX homolog of Cupriavidus pinatubonensis (strain JMP 134 / LMG 1197) (Cupriavidus necator (strain JMP 134)).